A 548-amino-acid polypeptide reads, in one-letter code: Chaperonin GroEL 2 (548 aa).

Residues 30-33 (TLGP), K51, 87-91 (DGTTT), G415, 479-481 (NAA), and D495 contribute to the ATP site. The tract at residues 524–548 (APKDAPPTAPAGVPGAGAGGPGFDF) is disordered. Over residues 537–548 (PGAGAGGPGFDF) the composition is skewed to gly residues.

The protein belongs to the chaperonin (HSP60) family. As to quaternary structure, forms a cylinder of 14 subunits composed of two heptameric rings stacked back-to-back. Interacts with the co-chaperonin GroES.

Its subcellular location is the cytoplasm. The catalysed reaction is ATP + H2O + a folded polypeptide = ADP + phosphate + an unfolded polypeptide.. Functionally, together with its co-chaperonin GroES, plays an essential role in assisting protein folding. The GroEL-GroES system forms a nano-cage that allows encapsulation of the non-native substrate proteins and provides a physical environment optimized to promote and accelerate protein folding. The chain is Chaperonin GroEL 2 from Burkholderia pseudomallei (strain 668).